A 692-amino-acid polypeptide reads, in one-letter code: Threonine--tRNA ligase (692 aa).

The TGS domain occupies Ala2–Thr59. Residues Asp255–Pro561 form a catalytic region. Cys360, His411, and His538 together coordinate Zn(2+).

The protein belongs to the class-II aminoacyl-tRNA synthetase family. In terms of assembly, homodimer. Zn(2+) serves as cofactor.

It is found in the cytoplasm. It catalyses the reaction tRNA(Thr) + L-threonine + ATP = L-threonyl-tRNA(Thr) + AMP + diphosphate + H(+). Catalyzes the attachment of threonine to tRNA(Thr) in a two-step reaction: L-threonine is first activated by ATP to form Thr-AMP and then transferred to the acceptor end of tRNA(Thr). Also edits incorrectly charged L-seryl-tRNA(Thr). This is Threonine--tRNA ligase from Bifidobacterium animalis subsp. lactis (strain AD011).